We begin with the raw amino-acid sequence, 1209 residues long: Neural cell adhesion molecule L1-like protein (1209 aa).

The signal sequence occupies residues 1-25 (MMELPLCGRGLILSLIFLLLKLSAA). Residues 26-1083 (EIPLSVQQVP…LYDDISTQGW (1058 aa)) lie on the Extracellular side of the membrane. 2 consecutive Ig-like C2-type domains span residues 35 to 124 (PTIV…EEIE) and 128 to 223 (PGVP…MKLT). 2 cysteine pairs are disulfide-bonded: C57–C109 and C153–C204. N87 is a glycosylation site (N-linked (GlcNAc...) asparagine). Residues N225 and N299 are each glycosylated (N-linked (GlcNAc...) asparagine). Ig-like C2-type domains follow at residues 235–328 (PKLL…VTVE), 331–417 (PRWK…ANID), 423–510 (PLIK…ANLD), and 515–607 (TKLR…TQVT). 4 disulfides stabilise this stretch: C262–C310, C352–C401, C445–C494, and C536–C591. N476 carries N-linked (GlcNAc...) asparagine glycosylation. Positions 555-558 (DGEA) match the DGEA motif. Residues N562 and N580 are each glycosylated (N-linked (GlcNAc...) asparagine). Fibronectin type-III domains follow at residues 614–709 (PPGN…TPPA), 714–807 (NPQN…SGED), 812–914 (APVI…TPEG), and 918–1015 (QPSF…LGEG). The tract at residues 696–717 (HASLPSDHHETPPAAPDKNPQN) is disordered. 4 N-linked (GlcNAc...) asparagine glycosylation sites follow: N767, N822, N945, and N1027. A helical transmembrane segment spans residues 1084–1104 (FIGLMCAIALLTLILLTICFV). Residues 1105–1209 (KRNRGGKYSV…SSTATFPLRA (105 aa)) lie on the Cytoplasmic side of the membrane. Residues 1115 to 1133 (KEKEDLHPDPEVQSAKDET) show a composition bias toward basic and acidic residues. The disordered stretch occupies residues 1115 to 1170 (KEKEDLHPDPEVQSAKDETFGEYSDSDEKPLKGSLRSLNRNMQPTESADSLVEYGE). Residues S1148, S1161, and S1181 each carry the phosphoserine modification. Polar residues predominate over residues 1150 to 1162 (RSLNRNMQPTESA). Residues 1182–1186 (FIGAY) carry the FIG[AQ]Y motif.

The protein belongs to the immunoglobulin superfamily. L1/neurofascin/NgCAM family. May interact with L1CAM. May interact with ITGB1/ITGA1 heterodimer and ITGB1/ITGA2 heterodimer as well as with ANK3. Post-translationally, cleavage by metalloprotease ADAM8 in the extracellular part generates 2 soluble forms (125 kDa and 165 kDa) in vitro and is inhibited by metalloprotease inhibitors. In brain extracts, these two soluble forms are also present and are dramatically reduced in mice lacking ADAM8. Cleaved by BACE1. In terms of processing, N-glycosylated. Contains N-linked oligosaccharides with a sulfated carbohydrate structure type HNK-1 (SO4-3-GlcUABeta1,3GalBeta1,4GlcNAc). O-glycosylated. As to expression, expressed in the brain, in the cerebellum and in the spinal cord. Detected in the retina and the optic nerve. Expressed in neurons and glial cells in the central nervous system and by Schwann cells in the peripheral nervous system.

The protein resides in the cell membrane. Its subcellular location is the secreted. The protein localises to the extracellular space. It is found in the extracellular matrix. In terms of biological role, extracellular matrix and cell adhesion protein that plays a role in nervous system development and in synaptic plasticity. Both soluble and membranous forms promote neurite outgrowth of cerebellar and hippocampal neurons and suppress neuronal cell death. Plays a role in neuronal positioning of pyramidal neurons as well as in regulation of both the number of interneurons and the efficacy of GABAergic synapses. May play a role in regulating cell migration in nerve regeneration and cortical development. Potentiates integrin-dependent cell migration towards extracellular matrix proteins. Recruits ANK3 to the plasma membrane. The polypeptide is Neural cell adhesion molecule L1-like protein (Chl1) (Mus musculus (Mouse)).